The sequence spans 610 residues: Pentatricopeptide repeat-containing protein At5g40400 (610 aa).

PPR repeat units follow at residues 165 to 199, 200 to 234, 235 to 269, 270 to 304, 305 to 339, 340 to 374, 375 to 409, 410 to 445, 446 to 480, 481 to 515, 516 to 546, and 551 to 586; these read DPVV…GFSV, SVVT…GIHP, NTYT…GFEP, DLVT…RVVP, DLVT…GIKP, DCMS…SVVP, DRFT…KVDI, PFEV…GHEA, KPET…NQVL, DAKT…EVKP, DSFI…FAME, and DPES…GFVP.

The protein belongs to the PPR family. P subfamily.

The polypeptide is Pentatricopeptide repeat-containing protein At5g40400 (Arabidopsis thaliana (Mouse-ear cress)).